Consider the following 118-residue polypeptide: MSSEKVRASHILIKHQGSRRKSSWKDPDGSLISATTRDDAVSQLQSLRQELLSDPASFSDLASRHSHCSSAKRGGDLGPFGRGQMQKPFEEATFALKVGEISDIVDTDSGVHIIKRTG.

Disordered stretches follow at residues 1-37 (MSSEKVRASHILIKHQGSRRKSSWKDPDGSLISATTR) and 61-84 (LASRHSHCSSAKRGGDLGPFGRGQ). Residues 3–118 (SEKVRASHIL…SGVHIIKRTG (116 aa)) enclose the PpiC domain. The segment covering 12–22 (LIKHQGSRRKS) has biased composition (basic residues).

It belongs to the PpiC/parvulin rotamase family. Post-translationally, the N-terminus is blocked. In terms of tissue distribution, expressed in roots, stems, leaves, flowers and seedlings.

It localises to the cytoplasm. The protein resides in the nucleus. It carries out the reaction [protein]-peptidylproline (omega=180) = [protein]-peptidylproline (omega=0). With respect to regulation, inhibited in vitro by juglone. Prolyl cis/trans isomerase with specificity for phospho-Ser-Pro bonds. In Digitalis lanata (Grecian foxglove), this protein is Peptidyl-prolyl cis-trans isomerase Pin1 (PARV12.8).